A 325-amino-acid chain; its full sequence is Forkhead box protein B1 (325 aa).

The segment at residues 12–103 (QKPPYSYISL…GDMFENGSFL (92 aa)) is a DNA-binding region (fork-head). The segment covering 284–309 (LSNSPPSLSPTSSQTATSQSSPATPS) has biased composition (low complexity). A disordered region spans residues 284-325 (LSNSPPSLSPTSSQTATSQSSPATPSETLTSPASALHSVAVH).

It localises to the nucleus. Its function is as follows. Transcription factor expressed by neural progenitor cells in specific regions of the embryonic neuroepithelium. Essential for the mammillary nuclei maintenance. Negatively regulates the proliferation of oligodendrocyte progenitors and promotes oligodendrocyte maturation. Also expressed in mammary glands, plays a role in lactation, controls development of mammary glands and the inferior colliculi of the midbrain in the central nervous system that regulates the milk-ejection reflex. This Homo sapiens (Human) protein is Forkhead box protein B1 (FOXB1).